We begin with the raw amino-acid sequence, 5255 residues long: SCO-spondin (5255 aa).

Positions 1-18 (MGIVATVLLWVVTEAARG) are cleaved as a signal peptide. The EMI domain occupies 19-111 (RWCERTEQVT…ACCAGWSGPH (93 aa)). 4 N-linked (GlcNAc...) asparagine glycosylation sites follow: Asn-97, Asn-136, Asn-156, and Asn-255. One can recognise a VWFD 1 domain in the interval 192 to 358 (ASCTVWAGSR…PDANPELSCS (167 aa)). 2 disulfide bridges follow: Cys-194–Cys-317 and Cys-216–Cys-357. Positions 453–508 (CGHGQRYSDCVSSCPASCMAAGTAEEGHCRDDCASGCECTPGLLLDRGACIPQSAC) constitute a TIL 1 domain. The VWFC 1 domain occupies 508-601 (CPCLHRGHIY…CGGHQPLSCL (94 aa)). Positions 546-717 (AECAVLGDLH…NKYRVSTDCP (172 aa)) constitute a VWFD 2 domain. 3 disulfides stabilise this stretch: Cys-548-Cys-681, Cys-570-Cys-716, and Cys-592-Cys-600. N-linked (GlcNAc...) asparagine glycosylation occurs at Asn-801. The TIL 2 domain maps to 809–868 (CRGGQVYQECSSPCGRTCADLRLDGASSCPSLDNICVSGCNCPEGPVLDDGGQCVPPGVC). Residues 868-926 (CPCQHSSQLYPAGSKIRQGCNACMCTAGTWSCTDAPCPDAAFCPGDLVYVFGSCLRTCD) enclose the VWFC 2 domain. Residues Asn-931 and Asn-972 are each glycosylated (N-linked (GlcNAc...) asparagine). The 171-residue stretch at 998–1168 (GTCVATGDPH…NSWRVSLLCP (171 aa)) folds into the VWFD 3 domain. 3 cysteine pairs are disulfide-bonded: Cys-1000-Cys-1132, Cys-1022-Cys-1167, and Cys-1043-Cys-1050. Residues 1263 to 1319 (CDGGQEYSACGPPCPQTCRNLGLELPEHCDTMSCLEGCFCPEGKVLHEGSCIDPAEC) form the TIL 3 domain. Asn-1340 carries an N-linked (GlcNAc...) asparagine glycan. LDL-receptor class A domains follow at residues 1362-1398 (HCPDSEFPCRSGGRCVPGAWLCDNEDDCGDGSDEVCA), 1400-1436 (HCAPHQHRCADGQCVPWGARCDGLSDCGDGSDERGCP), 1439-1477 (PCAPPEFRCASGRCIPRAHVCNGELDCGFADDSDEAGCS), 1479-1515 (SCSVGEFQCAAGRCVPYPHRCNGHDDCGDFSDERGCV), 1515-1551 (VCPAGHFQCPDAQCLPPAALCDGMQDCGDGTDEAFCP), and 1555-1593 (TCAPGQLPCPDGSCVSQVKLCDGIWDCRDGWDESSVRCM). Intrachain disulfides connect Cys-1363/Cys-1376, Cys-1370/Cys-1389, Cys-1383/Cys-1397, Cys-1401/Cys-1413, Cys-1408/Cys-1426, Cys-1420/Cys-1435, Cys-1440/Cys-1452, Cys-1447/Cys-1465, Cys-1459/Cys-1476, Cys-1480/Cys-1492, Cys-1487/Cys-1505, Cys-1499/Cys-1514, Cys-1516/Cys-1528, Cys-1523/Cys-1541, Cys-1535/Cys-1550, Cys-1556/Cys-1568, Cys-1563/Cys-1581, and Cys-1575/Cys-1592. Asn-1610 carries N-linked (GlcNAc...) asparagine glycosylation. 3 LDL-receptor class A domains span residues 1616–1652 (VCGPYEFPCRSGQCVPRGWVCDSEADCPDNSDELGCN), 1654–1693 (SCVLGHFPCALGAHCIHYDHLCDGIPHCPDHSDESDDNCG), and 1699–1734 (PCPGHFVCNNRVCVNATRVCDGALDCPQGEDELACE). 3 cysteine pairs are disulfide-bonded: Cys-1617–Cys-1629, Cys-1624–Cys-1642, and Cys-1636–Cys-1651. The N-linked (GlcNAc...) asparagine glycan is linked to Asn-1652. Intrachain disulfides connect Cys-1655/Cys-1668, Cys-1662/Cys-1681, Cys-1675/Cys-1692, Cys-1700/Cys-1711, Cys-1706/Cys-1724, and Cys-1718/Cys-1733. N-linked (GlcNAc...) asparagine glycosylation occurs at Asn-1713. Asn-1743 carries N-linked (GlcNAc...) asparagine glycosylation. Positions 1748–1790 (PCAEYSCRDGDCITFKQVCNGLPDCRDGDMASGWLPSDEWDCG) constitute an LDL-receptor class A 10 domain. 6 cysteine pairs are disulfide-bonded: Cys-1749/Cys-1759, Cys-1754/Cys-1772, Cys-1766/Cys-1789, Cys-1801/Cys-1837, Cys-1805/Cys-1842, and Cys-1816/Cys-1827. TSP type-1 domains are found at residues 1789-1843 (CGQW…TACP) and 1845-1903 (DGAW…DGCP). Residue Asn-1856 is glycosylated (N-linked (GlcNAc...) asparagine). Disulfide bonds link Cys-1857–Cys-1897, Cys-1861–Cys-1902, and Cys-1871–Cys-1881. In terms of domain architecture, TIL 4 spans 1907-1961 (CPGGLQPRPCAPCPASCADLASRAPCRREQCTPGCWCAEGLVLDGERGCVRPREC). EGF-like domains lie at 1919 to 1956 (CPASCADLASRAPCRREQCTPGCWCAEGLVLDGERGCV) and 1957 to 1983 (RPRECRCEVDGLRYWPGQRMKLNCRLC). Positions 1961-2019 (CRCEVDGLRYWPGQRMKLNCRLCTCLDGQPRRCRHNPACSVSCSWSAWSPWGECLGPCG) constitute a VWFC 3 domain. The region spanning 2002 to 2058 (SCSWSAWSPWGECLGPCGVQSIQWSFRSPSHPGKHGTNRQCRGIYRKARRCQTEPCQ) is the TSP type-1 3 domain. 3 disulfides stabilise this stretch: Cys-2003–Cys-2042, Cys-2014–Cys-2018, and Cys-2052–Cys-2057. The VWFC 4 domain occupies 2058 to 2120 (QECEHQGRSR…GKGDSCCFCA (63 aa)). Residues Asn-2125 and Asn-2230 are each glycosylated (N-linked (GlcNAc...) asparagine). Intrachain disulfides connect Cys-2162–Cys-2310, Cys-2328–Cys-2339, Cys-2335–Cys-2352, and Cys-2346–Cys-2361. The F5/8 type C domain maps to 2162-2310 (CYSPLGIASL…IFLRAELLGC (149 aa)). Residues 2327–2362 (PCGTGEFWCGVSCVTASRRCDGATDCPGGADEAGCE) form the LDL-receptor class A 11 domain. Positions 2352 to 2373 (CPGGADEAGCEPPSSTTLPTHP) are disordered. Residues 2364–2373 (PSSTTLPTHP) are compositionally biased toward polar residues. LDL-receptor class A domains lie at 2481-2517 (LCPPDQFLCDALGCVDAAMVCDGQQDCLDGSDEAHCG) and 2538-2574 (TCSPKQFSCGTGECLALEKRCDLSRDCADGSDESSCA). 12 cysteine pairs are disulfide-bonded: Cys-2482-Cys-2494, Cys-2489-Cys-2507, Cys-2501-Cys-2516, Cys-2539-Cys-2551, Cys-2546-Cys-2564, Cys-2558-Cys-2573, Cys-2576-Cys-2612, Cys-2587-Cys-2591, Cys-2622-Cys-2627, Cys-2642-Cys-2679, Cys-2646-Cys-2684, and Cys-2657-Cys-2669. TSP type-1 domains are found at residues 2575 to 2628 (DCIL…RACP) and 2630 to 2685 (PGAW…QPCG). One can recognise a TIL 5 domain in the interval 2708 to 2750 (PPCPQVCGDLSATSSCQSPCQEGCRCPPGLFLQEGTCVNASQC). Asn-2746 is a glycosylation site (N-linked (GlcNAc...) asparagine). 3 consecutive TSP type-1 domains span residues 2790-2844 (ACAW…TPCA), 2849-2903 (SSGW…APCP), and 2905-2958 (AGVW…RPCG). 9 cysteine pairs are disulfide-bonded: Cys-2791–Cys-2829, Cys-2802–Cys-2806, Cys-2839–Cys-2843, Cys-2861–Cys-2897, Cys-2865–Cys-2902, Cys-2881–Cys-2887, Cys-2917–Cys-2952, Cys-2921–Cys-2957, and Cys-2932–Cys-2942. Positions 2971–3020 (EECRHSEGRCPWICQDLGAGVACTAQCQPGCHCPAGLLLQNGTCVPPSHC) constitute a TIL 6 domain. N-linked (GlcNAc...) asparagine glycosylation is found at Asn-3011, Asn-3042, and Asn-3065. A VWFC 5 domain is found at 3020-3077 (CLCHHRGHLYQPGDINALDTCNNCTCVTGQMVCSTETCPVPCTWSNWTAWSTCSHSCD). 2 consecutive TSP type-1 domains span residues 3060 to 3115 (PCTW…QPCR) and 3117 to 3158 (VAPW…APCP). Disulfide bonds link Cys-3061-Cys-3099, Cys-3072-Cys-3076, and Cys-3109-Cys-3114. An N-linked (GlcNAc...) asparagine glycan is attached at Asn-3136. The TIL 7 domain occupies 3165-3217 (CPPGKQWQACAQGAASCAELSAAPPADGSCHPGCYCPPGALLLNNECVAEAAC). The region spanning 3217–3275 (CPCAVDGVLYQPGDVVPQGCHNCSCIAGRVTNCSQEDCGDVDGPWTPWTPWSECSASCG) is the VWFC 6 domain. Asn-3238 and Asn-3248 each carry an N-linked (GlcNAc...) asparagine glycan. Positions 3258–3309 (DGPWTPWTPWSECSASCGPGRQRRYRFCSAHPGVPCAEPQPQERPCARQPCH) constitute a TSP type-1 11 domain. Cystine bridges form between Cys-3270/Cys-3303, Cys-3274/Cys-3308, and Cys-3285/Cys-3293. 3 N-linked (GlcNAc...) asparagine glycosylation sites follow: Asn-3350, Asn-3366, and Asn-3392. 2 consecutive TSP type-1 domains span residues 3410 to 3475 (PGAW…PPCP) and 3477 to 3532 (DGAW…SSCP). Intrachain disulfides connect Cys-3422–Cys-3468, Cys-3426–Cys-3474, Cys-3437–Cys-3449, Cys-3489–Cys-3524, Cys-3492–Cys-3531, and Cys-3502–Cys-3514. A TIL 8 domain is found at 3534 to 3589 (CAGGLVAFTCGKPCPHSCEDLREDTACMATPRCLPACACPHGQLLQDGDCVPPELC). N-linked (GlcNAc...) asparagine glycans are attached at residues Asn-3598 and Asn-3625. TSP type-1 domains follow at residues 3644–3700 (DGGW…EGCP) and 3702–3751 (EEPW…HVCR). Cystine bridges form between Cys-3656–Cys-3693, Cys-3660–Cys-3699, Cys-3671–Cys-3683, Cys-3714–Cys-3745, Cys-3718–Cys-3750, and Cys-3729–Cys-3735. 2 N-linked (GlcNAc...) asparagine glycosylation sites follow: Asn-3823 and Asn-3869. 4 consecutive TSP type-1 domains span residues 3878-3934 (DGGF…PECP), 3951-4004 (EEGF…PLCS), 4018-4074 (NCSW…QACK), and 4076-4131 (DGAW…QPCD). 6 disulfide bridges follow: Cys-3890–Cys-3928, Cys-3894–Cys-3933, Cys-3906–Cys-3918, Cys-3963–Cys-3998, Cys-3967–Cys-4003, and Cys-3982–Cys-3988. The interval 3932 to 3951 (ECPAVPTTEPGPGVAGAEEE) is disordered. Asn-4018 is a glycosylation site (N-linked (GlcNAc...) asparagine). 6 disulfide bridges follow: Cys-4019-Cys-4055, Cys-4030-Cys-4034, Cys-4068-Cys-4073, Cys-4088-Cys-4125, Cys-4092-Cys-4130, and Cys-4103-Cys-4115. A TIL 9 domain is found at 4134-4189 (CPPGMALVTCANHCPRHCGDLQEGIVCREEEHCEPGCRCPNGTLEQDGGCVPLAHC). Asn-4174 and Asn-4211 each carry an N-linked (GlcNAc...) asparagine glycan. 3 TSP type-1 domains span residues 4230–4282 (RCPW…GPCP), 4322–4384 (GAEH…RPCP), and 4386–4433 (ECSW…SGCS). Disulfide bonds link Cys-4231–Cys-4266, Cys-4242–Cys-4246, and Cys-4276–Cys-4281. N-linked (GlcNAc...) asparagine glycosylation occurs at Asn-4362. 3 cysteine pairs are disulfide-bonded: Cys-4387–Cys-4417, Cys-4398–Cys-4400, and Cys-4427–Cys-4432. A glycan (N-linked (GlcNAc...) asparagine) is linked at Asn-4428. The TIL 10 domain occupies 4437–4492 (CEPPFEFQPCSPPCARLCSTLQHPELCPAQSHCLPGCFCPQGLLEQRSACVPPEQC). Asn-4498 carries N-linked (GlcNAc...) asparagine glycosylation. 2 consecutive TSP type-1 domains span residues 4537–4608 (LPLS…DICQ) and 4610–4662 (LCLW…AVCP). 6 disulfides stabilise this stretch: Cys-4548–Cys-4601, Cys-4551–Cys-4607, Cys-4575–Cys-4591, Cys-4611–Cys-4646, Cys-4622–Cys-4626, and Cys-4656–Cys-4661. One can recognise a TIL 11 domain in the interval 4675–4722 (TTCANSCPRACADLWQHVECVQGGCKPGCRCPQGQLLQDGLCVPTAQC). Asn-4730, Asn-4747, and Asn-4752 each carry an N-linked (GlcNAc...) asparagine glycan. 2 consecutive TSP type-1 domains span residues 4762-4815 (CPSY…QPCP) and 4817-4869 (GCQL…HNCT). 6 disulfides stabilise this stretch: Cys-4774–Cys-4809, Cys-4778–Cys-4814, Cys-4789–Cys-4798, Cys-4818–Cys-4852, Cys-4829–Cys-4833, and Cys-4863–Cys-4868. N-linked (GlcNAc...) asparagine glycosylation occurs at Asn-4867. One can recognise a TIL 12 domain in the interval 4872 to 4926 (CPRSQVHRECANACPHACADLRPQTQCLPQPCQPGCACPPGQVLQDGACVPPEEC). N-linked (GlcNAc...) asparagine glycans are attached at residues Asn-4939 and Asn-4970. The TSP type-1 27 domain occupies 4979 to 5033 (DCLWSPWSPWSPCSVTCGMGERLSHRHPLRQRLYEGAECLGPPVRRAACHLPDCA). Cystine bridges form between Cys-4980–Cys-5017, Cys-4991–Cys-4995, and Cys-5027–Cys-5032. 3 N-linked (GlcNAc...) asparagine glycosylation sites follow: Asn-5081, Asn-5122, and Asn-5169. Residues 5092–5150 (CECLHQGQLHQPGSEWQEQCARCRCVDGKANCTDGCTPLSCPEGEVKVREPGRCCPVCR) enclose the VWFC 7 domain. 4 cysteine pairs are disulfide-bonded: Cys-5161-Cys-5209, Cys-5175-Cys-5226, Cys-5185-Cys-5242, and Cys-5189-Cys-5244. Residues 5161–5248 (CRRFTELRNI…IHSCECSSCQ (88 aa)) enclose the CTCK domain.

This sequence belongs to the thrombospondin family.

The protein localises to the secreted. It localises to the extracellular space. Involved in the modulation of neuronal aggregation. May be involved in developmental events during the formation of the central nervous system. The chain is SCO-spondin (SSPO) from Gallus gallus (Chicken).